Here is a 761-residue protein sequence, read N- to C-terminus: Protein ACTIVITY OF BC1 COMPLEX KINASE 8, chloroplastic (761 aa).

Residues 1–57 (MATSSSSSSSLLLPNINFNSRQSPTITRSVSIAGIFLPRNRLSYNHNLRIRTRLIRA) constitute a chloroplast transit peptide. The Protein kinase domain occupies 288–648 (RFDYEPIAAA…VKDLRKRWDR (361 aa)). Residues 294-302 (IAAASLGQV) and K315 contribute to the ATP site. The active-site Proton acceptor is D452. The chain crosses the membrane as a helical span at residues 725–745 (PATIAYTVCAFFSLQVLIGII).

Belongs to the protein kinase superfamily. ADCK protein kinase family. Mostly expressed in leaves and flowers, and, to a lower extent, in stems, siliques and roots.

The protein resides in the plastid. It localises to the chloroplast envelope. It is found in the chloroplast membrane. It carries out the reaction L-seryl-[protein] + ATP = O-phospho-L-seryl-[protein] + ADP + H(+). The catalysed reaction is L-threonyl-[protein] + ATP = O-phospho-L-threonyl-[protein] + ADP + H(+). Functionally, involved in resistance to oxidative stress (e.g. hydrogen peroxide H(2)O(2)), high light and heavy metals (e.g. cadmium ions Cd(2+)). Influences responses to reactive oxygen species (ROS) production. Together with SIA1, regulates iron distribution within the chloroplast and mediates the oxidative stress response. Together with ABC1K7, influences chloroplast lipid synthesis/accumulation and modulates chloroplast membrane composition in response to stress. The polypeptide is Protein ACTIVITY OF BC1 COMPLEX KINASE 8, chloroplastic (Arabidopsis thaliana (Mouse-ear cress)).